The following is a 202-amino-acid chain: Glycerol-3-phosphate acyltransferase (202 aa).

4 helical membrane passes run 1 to 21, 84 to 104, 116 to 136, and 143 to 163; these read MTLI…FGVL, AVAA…FLHF, ILLG…LAVA, and SLAA…FLGF.

Belongs to the PlsY family. In terms of assembly, probably interacts with PlsX.

The protein resides in the cell inner membrane. It carries out the reaction an acyl phosphate + sn-glycerol 3-phosphate = a 1-acyl-sn-glycero-3-phosphate + phosphate. Its pathway is lipid metabolism; phospholipid metabolism. Its function is as follows. Catalyzes the transfer of an acyl group from acyl-phosphate (acyl-PO(4)) to glycerol-3-phosphate (G3P) to form lysophosphatidic acid (LPA). This enzyme utilizes acyl-phosphate as fatty acyl donor, but not acyl-CoA or acyl-ACP. This Nitrosospira multiformis (strain ATCC 25196 / NCIMB 11849 / C 71) protein is Glycerol-3-phosphate acyltransferase.